The following is a 285-amino-acid chain: Small ribosomal subunit biogenesis GTPase RsgA (285 aa).

In terms of domain architecture, CP-type G spans 61–215 (KNQLIRPKVA…IIDSPGFSSF (155 aa)). GTP-binding positions include 110-113 (TKID) and 159-167 (GQTGVGKTS). Positions 239, 244, 246, and 254 each coordinate Zn(2+).

This sequence belongs to the TRAFAC class YlqF/YawG GTPase family. RsgA subfamily. Monomer. Associates with 30S ribosomal subunit, binds 16S rRNA. The cofactor is Zn(2+).

The protein localises to the cytoplasm. Functionally, one of several proteins that assist in the late maturation steps of the functional core of the 30S ribosomal subunit. Helps release RbfA from mature subunits. May play a role in the assembly of ribosomal proteins into the subunit. Circularly permuted GTPase that catalyzes slow GTP hydrolysis, GTPase activity is stimulated by the 30S ribosomal subunit. This is Small ribosomal subunit biogenesis GTPase RsgA from Mesomycoplasma hyopneumoniae (strain 7448) (Mycoplasma hyopneumoniae).